The chain runs to 338 residues: 3-phosphoshikimate 1-carboxyvinyltransferase 2 (338 aa).

Position 25 (Arg-25) interacts with phosphoenolpyruvate. The 3-phosphoshikimate site is built by Ser-72, Ser-73, Gln-74, Ser-100, Asp-225, and Lys-252. Gln-74 serves as a coordination point for phosphoenolpyruvate. Asp-225 acts as the Proton acceptor in catalysis. The phosphoenolpyruvate site is built by Arg-256, Arg-298, and Lys-323.

It belongs to the EPSP synthase family.

It localises to the plastid. The protein resides in the chloroplast. The enzyme catalyses 3-phosphoshikimate + phosphoenolpyruvate = 5-O-(1-carboxyvinyl)-3-phosphoshikimate + phosphate. The protein operates within metabolic intermediate biosynthesis; chorismate biosynthesis; chorismate from D-erythrose 4-phosphate and phosphoenolpyruvate: step 6/7. Catalyzes the transfer of the enolpyruvyl moiety of phosphoenolpyruvate (PEP) to the 5-hydroxyl of shikimate-3-phosphate (S3P) to produce enolpyruvyl shikimate-3-phosphate and inorganic phosphate. The protein is 3-phosphoshikimate 1-carboxyvinyltransferase 2 (EPSPS-2) of Nicotiana tabacum (Common tobacco).